The sequence spans 272 residues: Putative hydro-lyase Rpal_1947 (272 aa).

It belongs to the D-glutamate cyclase family.

This Rhodopseudomonas palustris (strain TIE-1) protein is Putative hydro-lyase Rpal_1947.